Reading from the N-terminus, the 515-residue chain is MVQPYRHEPLTDFTVEANREAFLAALKKVESELGRDYPLVIGGERVMTEDKIISINPANKTEVVGRVAKANKELAERAMKTADEAFRTWSRTSPEARADILFRAAAIVRRRKHEFSAWLVKEAGKPWREADADTAEAIDFMEYYGRQMLKLKDGIPVESRPGETNRFFYIPLGVGVVISPWNFPFAIMAGTTVASLVTGNTVLLKPASATPVVAYKFVEVLEEAGLPAGVLNYIPGSGAEVGDYLVDHPRTRFISFTGSRDVGIRIYERAAKVHPGQIWLKRVIAEMGGKDAIVVDKEADLELAAQSIVASAFGFSGQKCSACSRAIIVEDVYDQVLSRVVELTKQLNVGDPAEQATFMGPVIDQNAYNKIMEYIEIGKQEGRLMTGGEGDDAKGFFIQPTVFADVDPNARIMQEEIFGPVVAFAKARDFDHALEIANNTEYGLTGAVISRNRANLEKARHEFHVGNLYFNRGCTGAIVGYQPFGGFNMSGTDSKAGGPDYLILHMQAKTVSEMF.

Active-site residues include Glu-286 and Cys-320.

It belongs to the aldehyde dehydrogenase family. RocA subfamily.

It catalyses the reaction L-glutamate 5-semialdehyde + NAD(+) + H2O = L-glutamate + NADH + 2 H(+). Its pathway is amino-acid degradation; L-proline degradation into L-glutamate; L-glutamate from L-proline: step 2/2. The protein is 1-pyrroline-5-carboxylate dehydrogenase of Geobacillus kaustophilus (strain HTA426).